A 227-amino-acid chain; its full sequence is Large ribosomal subunit protein uL3 (227 aa).

The disordered stretch occupies residues 129 to 154 (GMQPVSHGQSDRTRSRGSSGAQGPQK).

This sequence belongs to the universal ribosomal protein uL3 family. In terms of assembly, part of the 50S ribosomal subunit. Forms a cluster with proteins L14 and L19.

In terms of biological role, one of the primary rRNA binding proteins, it binds directly near the 3'-end of the 23S rRNA, where it nucleates assembly of the 50S subunit. This is Large ribosomal subunit protein uL3 from Endomicrobium trichonymphae.